Reading from the N-terminus, the 86-residue chain is DNA-directed RNA polymerase subunit omega (86 aa).

Belongs to the RNA polymerase subunit omega family. As to quaternary structure, the RNAP catalytic core consists of 2 alpha, 1 beta, 1 beta' and 1 omega subunit. When a sigma factor is associated with the core the holoenzyme is formed, which can initiate transcription.

The catalysed reaction is RNA(n) + a ribonucleoside 5'-triphosphate = RNA(n+1) + diphosphate. In terms of biological role, promotes RNA polymerase assembly. Latches the N- and C-terminal regions of the beta' subunit thereby facilitating its interaction with the beta and alpha subunits. The polypeptide is DNA-directed RNA polymerase subunit omega (Agathobacter rectalis (strain ATCC 33656 / DSM 3377 / JCM 17463 / KCTC 5835 / VPI 0990) (Eubacterium rectale)).